A 75-amino-acid chain; its full sequence is MKFQMIAAVLLIAFCLSVVVTARMELQDDEEMKNGSFQKRRTCIDTIPKSRCTAFQCKHSMKYRLSFCRKTCGTC.

Positions 1 to 22 (MKFQMIAAVLLIAFCLSVVVTA) are cleaved as a signal peptide. Positions 23–40 (RMELQDDEEMKNGSFQKR) are excised as a propeptide. The ShKT domain maps to 43 to 75 (CIDTIPKSRCTAFQCKHSMKYRLSFCRKTCGTC). 3 disulfides stabilise this stretch: Cys-43–Cys-75, Cys-52–Cys-68, and Cys-57–Cys-72.

The protein belongs to the sea anemone type 1 potassium channel toxin family. Type 1a subfamily.

It localises to the secreted. The protein resides in the nematocyst. Functionally, inhibits voltage-gated potassium channels (Kv) with higher potency for Kv1.1/KCNA1 and Kv1.3/KCNA3 (IC(50)=3.4 nM). This Thalassianthus aster (Fuzzy-tipped anemone) protein is Kappa-thalatoxin-Tas2a.